A 171-amino-acid polypeptide reads, in one-letter code: Disulfide bond formation protein B (171 aa).

Topologically, residues M1–L10 are cytoplasmic. A helical membrane pass occupies residues N11–I27. Topologically, residues F28–I46 are periplasmic. A disulfide bridge connects residues C38 and C41. The chain crosses the membrane as a helical span at residues G47–P63. The Cytoplasmic segment spans residues K64–L70. The chain crosses the membrane as a helical span at residues L71 to A88. Residues R89–E145 are Periplasmic-facing. C104 and C131 form a disulfide bridge. The helical transmembrane segment at Q146 to R164 threads the bilayer. At I165–A171 the chain is on the cytoplasmic side.

This sequence belongs to the DsbB family.

Its subcellular location is the cell inner membrane. In terms of biological role, required for disulfide bond formation in some periplasmic proteins. Acts by oxidizing the DsbA protein. The chain is Disulfide bond formation protein B from Psychrobacter sp. (strain PRwf-1).